Consider the following 55-residue polypeptide: Sec-independent protein translocase protein TatA (55 aa).

The helical transmembrane segment at 1–21 (MSLGPWQLFLVLIIILVLFGA) threads the bilayer.

Belongs to the TatA/E family. The Tat system comprises two distinct complexes: a TatABC complex, containing multiple copies of TatA, TatB and TatC subunits, and a separate TatA complex, containing only TatA subunits. Substrates initially bind to the TatABC complex, which probably triggers association of the separate TatA complex to form the active translocon.

Its subcellular location is the cell membrane. Part of the twin-arginine translocation (Tat) system that transports large folded proteins containing a characteristic twin-arginine motif in their signal peptide across membranes. TatA could form the protein-conducting channel of the Tat system. The protein is Sec-independent protein translocase protein TatA of Wolbachia pipientis wMel.